We begin with the raw amino-acid sequence, 466 residues long: Soluble pyridine nucleotide transhydrogenase (466 aa).

36 to 45 (ERYHNVGGGC) contributes to the FAD binding site.

The protein belongs to the class-I pyridine nucleotide-disulfide oxidoreductase family. Requires FAD as cofactor.

The protein resides in the cytoplasm. It catalyses the reaction NAD(+) + NADPH = NADH + NADP(+). Functionally, conversion of NADPH, generated by peripheral catabolic pathways, to NADH, which can enter the respiratory chain for energy generation. The polypeptide is Soluble pyridine nucleotide transhydrogenase (Citrobacter koseri (strain ATCC BAA-895 / CDC 4225-83 / SGSC4696)).